Consider the following 31-residue polypeptide: Cytochrome b6-f complex subunit 6 (31 aa).

A helical membrane pass occupies residues 4–24; that stretch reads ITSYFGFLLAALTITPALFIG.

This sequence belongs to the PetL family. As to quaternary structure, the 4 large subunits of the cytochrome b6-f complex are cytochrome b6, subunit IV (17 kDa polypeptide, PetD), cytochrome f and the Rieske protein, while the 4 small subunits are PetG, PetL, PetM and PetN. The complex functions as a dimer.

The protein resides in the plastid. It is found in the chloroplast thylakoid membrane. Component of the cytochrome b6-f complex, which mediates electron transfer between photosystem II (PSII) and photosystem I (PSI), cyclic electron flow around PSI, and state transitions. PetL is important for photoautotrophic growth as well as for electron transfer efficiency and stability of the cytochrome b6-f complex. This chain is Cytochrome b6-f complex subunit 6, found in Saccharum barberi (Indian sugarcane).